The chain runs to 124 residues: Holo-[acyl-carrier-protein] synthase (124 aa).

2 residues coordinate Mg(2+): D8 and E56.

It belongs to the P-Pant transferase superfamily. AcpS family. It depends on Mg(2+) as a cofactor.

It is found in the cytoplasm. The catalysed reaction is apo-[ACP] + CoA = holo-[ACP] + adenosine 3',5'-bisphosphate + H(+). Transfers the 4'-phosphopantetheine moiety from coenzyme A to a Ser of acyl-carrier-protein. This is Holo-[acyl-carrier-protein] synthase from Maridesulfovibrio salexigens (strain ATCC 14822 / DSM 2638 / NCIMB 8403 / VKM B-1763) (Desulfovibrio salexigens).